A 205-amino-acid polypeptide reads, in one-letter code: Ephrin-A1 (205 aa).

The N-terminal stretch at 1–17 (MEFLWAPLLGLCCSLAA) is a signal peptide. One can recognise an Ephrin RBD domain in the interval 18–161 (ADRHIVFWNS…THNPQAHVNP (144 aa)). An N-linked (GlcNAc...) asparagine glycan is attached at asparagine 26. 2 cysteine pairs are disulfide-bonded: cysteine 51–cysteine 92 and cysteine 80–cysteine 140. Serine 182 is lipidated: GPI-anchor amidated serine. Positions 183–205 (AAPRLFPLVWAVLLLPLLLLQSQ) are cleaved as a propeptide — removed in mature form.

Belongs to the ephrin family. As to quaternary structure, monomer. Homodimer. Forms heterodimers with EPHA2. Binds to the receptor tyrosine kinases EPHA2, EPHA3, EPHA4, EPHA5, EPHA6 and EPHA7. Also binds with low affinity to EPHA1. Post-translationally, undergoes proteolysis by a metalloprotease to give rise to a soluble monomeric form. N-Glycosylation is required for binding to EPHA2 receptor and inducing its internalization. As to expression, expressed in myogenic progenitor cells.

The protein resides in the cell membrane. It is found in the secreted. Functionally, cell surface GPI-bound ligand for Eph receptors, a family of receptor tyrosine kinases which are crucial for migration, repulsion and adhesion during neuronal, vascular and epithelial development. Binds promiscuously Eph receptors residing on adjacent cells, leading to contact-dependent bidirectional signaling into neighboring cells. Plays an important role in angiogenesis and tumor neovascularization. The recruitment of VAV2, VAV3 and PI3-kinase p85 subunit by phosphorylated EPHA2 is critical for EFNA1-induced RAC1 GTPase activation and vascular endothelial cell migration and assembly. Exerts anti-oncogenic effects in tumor cells through activation and down-regulation of EPHA2. Activates EPHA2 by inducing tyrosine phosphorylation which leads to its internalization and degradation. Acts as a negative regulator in the tumorigenesis of gliomas by down-regulating EPHA2 and FAK. Can evoke collapse of embryonic neuronal growth cone and regulates dendritic spine morphogenesis. In Mus musculus (Mouse), this protein is Ephrin-A1 (Efna1).